The following is a 147-amino-acid chain: Cystatin-9-like (147 aa).

A signal peptide spans 1-28 (MLGLPWKGGLSWALLLLLLGSQILLIYA). A disulfide bridge links cysteine 98 with cysteine 108. Asparagine 117 and asparagine 139 each carry an N-linked (GlcNAc...) asparagine glycan. Cysteine 122 and cysteine 142 are joined by a disulfide.

It belongs to the cystatin family. In terms of tissue distribution, specifically expressed in testis.

It is found in the secreted. This is Cystatin-9-like (CST9L) from Homo sapiens (Human).